We begin with the raw amino-acid sequence, 224 residues long: Putative adhesin RF_1314 (224 aa).

An N-terminal signal peptide occupies residues methionine 1 to alanine 22.

This is Putative adhesin RF_1314 from Rickettsia felis (strain ATCC VR-1525 / URRWXCal2) (Rickettsia azadi).